A 539-amino-acid polypeptide reads, in one-letter code: Squalene monooxygenase SE1 (539 aa).

The next 2 helical transmembrane spans lie at 22–42 and 71–91; these read LLIDQYFLGWIFAFLFGFLLL and IAGSTDVIIVGAGVAGSALAY. FAD contacts are provided by residues 84–85, 104–105, Arg112, Arg183, Val199, Asp361, and Met374; these read VA and ER. The chain crosses the membrane as a helical span at residues 472 to 492; it reads LFLHFFAVAIYGVGRLLIPFP.

Belongs to the squalene monooxygenase family. Requires FAD as cofactor. As to expression, mostly expressed in flower buds and leaves, and, to a lower extent, at high levels thought, in roots and petioles. In petioles, preferentially observed in vascular bundle tissue (phloem cells and parenchymatous cells near xylem) and resin ducts.

Its subcellular location is the microsome membrane. It localises to the endoplasmic reticulum membrane. The catalysed reaction is squalene + reduced [NADPH--hemoprotein reductase] + O2 = (S)-2,3-epoxysqualene + oxidized [NADPH--hemoprotein reductase] + H2O + H(+). It participates in terpene metabolism; lanosterol biosynthesis; lanosterol from farnesyl diphosphate: step 2/3. Its function is as follows. Component of the triterpene saponins (e.g. ginsenosides or panaxosides) and phytosterols biosynthetic pathways. Catalyzes the first oxygenation step in sterol biosynthesis and is suggested to be one of the rate-limiting enzymes in this pathway. The sequence is that of Squalene monooxygenase SE1 from Panax ginseng (Korean ginseng).